Reading from the N-terminus, the 408-residue chain is Argininosuccinate synthase (408 aa).

Residues 16–24 and Ala44 each bind ATP; that span reads AYSGGLDTS. 2 residues coordinate L-citrulline: Tyr96 and Ser101. Gly126 serves as a coordination point for ATP. Positions 128, 132, and 133 each coordinate L-aspartate. An L-citrulline-binding site is contributed by Asn132. Residues Arg136, Ser185, Ser194, Glu270, and Tyr282 each contribute to the L-citrulline site.

The protein belongs to the argininosuccinate synthase family. Type 1 subfamily. Homotetramer.

The protein resides in the cytoplasm. It carries out the reaction L-citrulline + L-aspartate + ATP = 2-(N(omega)-L-arginino)succinate + AMP + diphosphate + H(+). Its pathway is amino-acid biosynthesis; L-arginine biosynthesis; L-arginine from L-ornithine and carbamoyl phosphate: step 2/3. In Shewanella woodyi (strain ATCC 51908 / MS32), this protein is Argininosuccinate synthase.